The chain runs to 669 residues: Translation factor GUF1, mitochondrial (669 aa).

The transit peptide at 1 to 49 (MWTLVGRGWGCARALAPRATGAALLVAPGPRSAPTLGAAPESWATDRLY) directs the protein to the mitochondrion. One can recognise a tr-type G domain in the interval 66–247 (ENIRNFSIVA…AIIERIPPPK (182 aa)). Residues 75 to 82 (AHVDHGKS), 140 to 144 (DTPGH), and 194 to 197 (NKID) contribute to the GTP site.

Belongs to the TRAFAC class translation factor GTPase superfamily. Classic translation factor GTPase family. LepA subfamily.

It is found in the mitochondrion inner membrane. The catalysed reaction is GTP + H2O = GDP + phosphate + H(+). Its function is as follows. Promotes mitochondrial protein synthesis. May act as a fidelity factor of the translation reaction, by catalyzing a one-codon backward translocation of tRNAs on improperly translocated ribosomes. Binds to mitochondrial ribosomes in a GTP-dependent manner. The protein is Translation factor GUF1, mitochondrial of Homo sapiens (Human).